A 325-amino-acid chain; its full sequence is MKMNKLVKSSVATSMALLLLSGTANAEGKITPVSVKKVDDKVTLYKTTATADSDKFKISQILTFNFIKDKSYDKDTLVLKATGNINSGFVKPNPNDYDFSKLYWGAKYNVSISSQSNDSVNVVDYAPKNQNEEFQVQNTLGYTFGGDISISNGLSGGLNGNTAFSETINYKQESYRTTLSRNTNYKNVGWGVEAHKIMNNGWGPYGRDSFHPTYGNELFLAGRQSSAYAGQNFIAQHQMPLLSRSNFNPEFLSVLSHRQDGAKKSKITVTYQREMDLYQIRWNGFYWAGANYKNFKTRTFKSTYEIDWENHKVKLLDTKETENNK.

An N-terminal signal peptide occupies residues 1–26; sequence MKMNKLVKSSVATSMALLLLSGTANA.

Belongs to the aerolysin family. In terms of assembly, toxicity requires sequential binding and synergistic association of a class S and a class F component which form heterooligomeric complexes. HlgB (class F) associates with either hlgA thus forming an AB toxin or with hlgC thus forming a CB toxin. Interacts with host AMFR.

It is found in the secreted. In terms of biological role, toxin that seems to act by forming pores in the membrane of the cell. Has a hemolytic and a leucotoxic activity. Promotes host AMFR-mediated inflammation by mediating 'Lys-27'-linked ubiquitination of TAB3, TAK1-TAB3 complex formation and phosphorylation of TAK1/MAP3K7. In turn, activates host NF-kappa-B signaling pathway. The protein is Gamma-hemolysin component B (hlgB) of Staphylococcus aureus (strain NCTC 8325 / PS 47).